Reading from the N-terminus, the 283-residue chain is Thymidylate synthase (283 aa).

R22 contributes to the dUMP binding site. The active-site Nucleophile is C160. DUMP-binding positions include 180–183 (RSCD), N191, and 221–223 (HIY). Residue D183 coordinates (6R)-5,10-methylene-5,6,7,8-tetrahydrofolate. A282 contributes to the (6R)-5,10-methylene-5,6,7,8-tetrahydrofolate binding site.

This sequence belongs to the thymidylate synthase family. Bacterial-type ThyA subfamily. In terms of assembly, homodimer.

Its subcellular location is the cytoplasm. It carries out the reaction dUMP + (6R)-5,10-methylene-5,6,7,8-tetrahydrofolate = 7,8-dihydrofolate + dTMP. Its pathway is pyrimidine metabolism; dTTP biosynthesis. Functionally, catalyzes the reductive methylation of 2'-deoxyuridine-5'-monophosphate (dUMP) to 2'-deoxythymidine-5'-monophosphate (dTMP) while utilizing 5,10-methylenetetrahydrofolate (mTHF) as the methyl donor and reductant in the reaction, yielding dihydrofolate (DHF) as a by-product. This enzymatic reaction provides an intracellular de novo source of dTMP, an essential precursor for DNA biosynthesis. The polypeptide is Thymidylate synthase (Colwellia psychrerythraea (strain 34H / ATCC BAA-681) (Vibrio psychroerythus)).